A 226-amino-acid polypeptide reads, in one-letter code: Ribosomal RNA small subunit methyltransferase G (226 aa).

Residues Gly-83, Phe-88, 136–137 (IE), and Arg-152 contribute to the S-adenosyl-L-methionine site. The interval 199–226 (FSPSQSDPEGSVLKVRGLHGPDGQPHRR) is disordered.

This sequence belongs to the methyltransferase superfamily. RNA methyltransferase RsmG family.

It localises to the cytoplasm. The catalysed reaction is guanosine(527) in 16S rRNA + S-adenosyl-L-methionine = N(7)-methylguanosine(527) in 16S rRNA + S-adenosyl-L-homocysteine. Its function is as follows. Specifically methylates the N7 position of guanine in position 527 of 16S rRNA. The sequence is that of Ribosomal RNA small subunit methyltransferase G from Parvibaculum lavamentivorans (strain DS-1 / DSM 13023 / NCIMB 13966).